The chain runs to 189 residues: MKLIIGLGNPGKEYSGNRHNVGFQCLSRFAKDNHISFDKKCCLSRTGSGRINDEEIVLAKPQTYMNLSGKAASQLLRRYNLKAADIIVVQDDLDLPAGKIRLRLGGSAGGHNGISSIITDIGTKEFIRLKIGIGKPDSRNNGTEVVDHVLGNFGGEEREIMDKAITRASEALTCLLTFGLDTASNRFNS.

Tyrosine 14 is a binding site for tRNA. Histidine 19 serves as the catalytic Proton acceptor. TRNA-binding residues include tyrosine 64, asparagine 66, and asparagine 112.

It belongs to the PTH family. Monomer.

The protein localises to the cytoplasm. It carries out the reaction an N-acyl-L-alpha-aminoacyl-tRNA + H2O = an N-acyl-L-amino acid + a tRNA + H(+). Hydrolyzes ribosome-free peptidyl-tRNAs (with 1 or more amino acids incorporated), which drop off the ribosome during protein synthesis, or as a result of ribosome stalling. Functionally, catalyzes the release of premature peptidyl moieties from peptidyl-tRNA molecules trapped in stalled 50S ribosomal subunits, and thus maintains levels of free tRNAs and 50S ribosomes. The sequence is that of Peptidyl-tRNA hydrolase from Dehalococcoides mccartyi (strain ATCC BAA-2266 / KCTC 15142 / 195) (Dehalococcoides ethenogenes (strain 195)).